Here is a 464-residue protein sequence, read N- to C-terminus: Endo-1,4-beta-xylanase A (464 aa).

The signal sequence occupies residues 1–33 (MFRHHPTRGRRTAGLLAAALATLSAGLTAVAPA). In terms of domain architecture, GH10 spans 40 to 349 (TATLGELAEA…KPAYHAIAAA (310 aa)). Glu-166 (proton donor) is an active-site residue. Glu-271 acts as the Nucleophile in catalysis. Positions 354–457 (SPAPGGNCTA…TPADVTCTPG (104 aa)) constitute a CBM2 domain.

The protein belongs to the glycosyl hydrolase 10 (cellulase F) family. Requires Does not require any standard metal (Mg(2+), Mn2(+), Ca(2+)). as cofactor.

The enzyme catalyses Endohydrolysis of (1-&gt;4)-beta-D-xylosidic linkages in xylans.. It functions in the pathway glycan degradation; xylan degradation. Its activity is regulated as follows. Completely inhibited by Hg(2+), unaffected by EDTA. Contributes to hydrolysis of hemicellulose, the major component of plant cell-walls. Hydrolyzes xylan to xylose and xylobiose. This chain is Endo-1,4-beta-xylanase A (xynAS9), found in Streptomyces sp.